The following is a 980-amino-acid chain: MTSPQLEWTLQTLLEQLNEDELKSFKSLLWAFPLEDVLQKTPWSEVEEADGKKLAEILVNTSSENWIRNATVNILEEMNLTELCKMAKAEMMEDGQVQEIDNPELGDAEEDSELAKPGEKEGWRNSMEKQSLVWKNTFWQGDIDNFHDDVTLRNQRFIPFLNPRTPRKLTPYTVVLHGPAGVGKTTLAKKCMLDWTDCNLSPTLRYAFYLSCKELSRMGPCSFAELISKDWPELQDDIPSILAQAQRILFVVDGLDELKVPPGALIQDICGDWEKKKPVPVLLGSLLKRKMLPRAALLVTTRPRALRDLQLLAQQPIYVRVEGFLEEDRRAYFLRHFGDEDQAMRAFELMRSNAALFQLGSAPAVCWIVCTTLKLQMEKGEDPVPTCLTRTGLFLRFLCSRFPQGAQLRGALRTLSLLAAQGLWAQMSVFHREDLERLGVQESDLRLFLDGDILRQDRVSKGCYSFIHLSFQQFLTALFYALEKEEGEDRDGHAWDIGDVQKLLSGEERLKNPDLIQVGHFLFGLANEKRAKELEATFGCRMSPDIKQELLQCKAHLHANKPLSVTDLKEVLGCLYESQEEELAKVVVAPFKEISIHLTNTSEVMHCSFSLKHCQDLQKLSLQVAKGVFLENYMDFELDIEFERCTYLTIPNWARQDLRSLRLWTDFCSLFSSNSNLKFLEVKQSFLSDSSVRILCDHVTRSTCHLQKVEIKNVTPDTAYRDFCLAFIGKKTLTHLTLAGHIEWERTMMLMLCDLLRNHKCNLQYLRLGGHCATPEQWAEFFYVLKANQSLKHLRLSANVLLDEGAMLLYKTMTRPKHFLQMLSLENCRLTEASCKDLAAVLVVSKKLTHLCLAKNPIGDTGVKFLCEGLSYPDCKLQTLVLQQCSITKLGCRYLSEALQEACSLTNLDLSINQIARGLWILCQALENPNCNLKHLRLKTYETNLEIKKLLEEVKEKNPKLTIDCNASGATAPPCCDFFC.

The 93-residue stretch at Met-1 to Glu-93 folds into the Pyrin domain. Residues Glu-104–Trp-123 form a disordered region. The segment covering Glu-113 to Trp-123 has biased composition (basic and acidic residues). The NACHT domain maps to Tyr-172–Asp-491. Residue Gly-178 to Thr-185 participates in ATP binding. LRR repeat units follow at residues Cys-614 to Leu-638, Asn-674 to Asp-697, Lys-760 to Val-784, Asn-788 to Tyr-810, Lys-817 to Ala-840, Ser-845 to Glu-868, Asp-874 to Glu-897, Ala-902 to Asn-928, and Leu-933 to Lys-957.

This sequence belongs to the NLRP family. Directly interacts with CASP1 and IL1B. In terms of tissue distribution, expressed in numerous tissues including uterus and ovary, with low levels in heart and brain. Not detected in skeletal muscle.

Functionally, inhibits CASP1/caspase-1-dependent IL1B secretion. This chain is NACHT, LRR and PYD domains-containing protein 7 (NLRP7), found in Homo sapiens (Human).